The primary structure comprises 545 residues: Light-independent protochlorophyllide reductase subunit N (545 aa).

[4Fe-4S] cluster-binding residues include C102, C127, and C187.

This sequence belongs to the BchN/ChlN family. In terms of assembly, protochlorophyllide reductase is composed of three subunits; ChlL, ChlN and ChlB. Forms a heterotetramer of two ChlB and two ChlN subunits. [4Fe-4S] cluster serves as cofactor.

Its subcellular location is the plastid. The protein localises to the chloroplast. It carries out the reaction chlorophyllide a + oxidized 2[4Fe-4S]-[ferredoxin] + 2 ADP + 2 phosphate = protochlorophyllide a + reduced 2[4Fe-4S]-[ferredoxin] + 2 ATP + 2 H2O. The protein operates within porphyrin-containing compound metabolism; chlorophyll biosynthesis (light-independent). Functionally, component of the dark-operative protochlorophyllide reductase (DPOR) that uses Mg-ATP and reduced ferredoxin to reduce ring D of protochlorophyllide (Pchlide) to form chlorophyllide a (Chlide). This reaction is light-independent. The NB-protein (ChlN-ChlB) is the catalytic component of the complex. This chain is Light-independent protochlorophyllide reductase subunit N, found in Chlamydomonas reinhardtii (Chlamydomonas smithii).